The primary structure comprises 888 residues: Tyrosine-protein kinase receptor UFO (888 aa).

Residues 1–18 (MGRVPLAWWLALCCWGCA) form the signal peptide. Residues 19 to 86 (AHKDTQTEAG…QTQVPLGEDW (68 aa)) form an interaction with GAS6 region. Over 19 to 445 (AHKDTQTEAG…PPRAFSWPWW (427 aa)) the chain is Extracellular. 2 Ig-like C2-type domains span residues 30 to 122 (PFVG…TFVS) and 133 to 216 (PYFL…ATIT). N-linked (GlcNAc...) asparagine glycosylation is present at Asn-37. Cys-50 and Cys-111 form a disulfide bridge. N-linked (GlcNAc...) asparagine glycosylation is found at Asn-151 and Asn-192. An intrachain disulfide couples Cys-154 to Cys-199. 2 consecutive Fibronectin type-III domains span residues 221 to 325 (RPHH…TTEG) and 330 to 422 (PPEN…PWRP). Asn-333, Asn-339, and Asn-395 each carry an N-linked (GlcNAc...) asparagine glycan. The helical transmembrane segment at 446–466 (YVLLGALVAAACVLILALFLV) threads the bilayer. Residues 467–888 (HRRKKETRYG…PAPPGQEDGA (422 aa)) lie on the Cytoplasmic side of the membrane. The Protein kinase domain maps to 530-801 (VALGKTLGEG…ELREDLENTL (272 aa)). ATP-binding positions include 536–544 (LGEGEFGAV) and Lys-561. Asp-666 (proton acceptor) is an active-site residue. 3 positions are modified to phosphotyrosine; by autocatalysis: Tyr-697, Tyr-773, and Tyr-815. The interval 820–846 (EGGSHLEPRGAAGGADPPTQPDPKDSC) is disordered. Tyr-860 bears the Phosphotyrosine; by autocatalysis mark. Residues 865-888 (STAPGPTLSADRGCPAPPGQEDGA) are disordered.

The protein belongs to the protein kinase superfamily. Tyr protein kinase family. AXL/UFO subfamily. Heterodimer and heterotetramer with ligand GAS6. Interacts with CBL, GRB2, LCK, NCK2, PIK3R1, PIK3R2, PIK3R3, PLCG1, SOCS1 and TNS2. Part of a complex including AXL, TNK2 and GRB2, in which GRB2 promotes AXL recruitment by TNK2. Post-translationally, monoubiquitinated upon GAS6-binding. A very small proportion of the receptor could be subjected to polyubiquitination in a very transient fashion. In terms of processing, phosphorylated at tyrosine residues by autocatalysis, which activates kinase activity. As to expression, in distinct substructures of a broad spectrum of developing tissues (in the late embryogenesis). In cells forming organ capsules as well as in connective tissue structures (in adult).

The protein localises to the cell membrane. The enzyme catalyses L-tyrosyl-[protein] + ATP = O-phospho-L-tyrosyl-[protein] + ADP + H(+). With respect to regulation, activated by GAS6-binding and subsequent autophosphorylation. Its function is as follows. Receptor tyrosine kinase that transduces signals from the extracellular matrix into the cytoplasm by binding growth factor GAS6 and which is thus regulating many physiological processes including cell survival, cell proliferation, migration and differentiation. Ligand binding at the cell surface induces dimerization and autophosphorylation of AXL. Following activation by ligand, AXL binds and induces tyrosine phosphorylation of PI3-kinase subunits PIK3R1, PIK3R2 and PIK3R3; but also GRB2, PLCG1, LCK and PTPN11. Other downstream substrate candidates for AXL are CBL, NCK2, SOCS1 and TNS2. Recruitment of GRB2 and phosphatidylinositol 3 kinase regulatory subunits by AXL leads to the downstream activation of the AKT kinase. GAS6/AXL signaling plays a role in various processes such as endothelial cell survival during acidification by preventing apoptosis, optimal cytokine signaling during human natural killer cell development, hepatic regeneration, gonadotropin-releasing hormone neuron survival and migration, platelet activation, or regulation of thrombotic responses. Also plays an important role in inhibition of Toll-like receptors (TLRs)-mediated innate immune response. The polypeptide is Tyrosine-protein kinase receptor UFO (Axl) (Mus musculus (Mouse)).